The sequence spans 48 residues: ATP synthase protein 8 (48 aa).

Residues 4–24 traverse the membrane as a helical segment; that stretch reads LVPFYFINILSFGFLIFTVLL.

Belongs to the ATPase protein 8 family. In terms of assembly, F-type ATPases have 2 components, CF(1) - the catalytic core - and CF(0) - the membrane proton channel.

It localises to the mitochondrion membrane. Mitochondrial membrane ATP synthase (F(1)F(0) ATP synthase or Complex V) produces ATP from ADP in the presence of a proton gradient across the membrane which is generated by electron transport complexes of the respiratory chain. F-type ATPases consist of two structural domains, F(1) - containing the extramembraneous catalytic core and F(0) - containing the membrane proton channel, linked together by a central stalk and a peripheral stalk. During catalysis, ATP synthesis in the catalytic domain of F(1) is coupled via a rotary mechanism of the central stalk subunits to proton translocation. Part of the complex F(0) domain. Minor subunit located with subunit a in the membrane. This is ATP synthase protein 8 (atp8) from Schizosaccharomyces pombe (strain 972 / ATCC 24843) (Fission yeast).